The chain runs to 453 residues: Oocyte zinc finger protein XlCOF6 (453 aa).

14 consecutive C2H2-type zinc fingers follow at residues 6–29, 67–89, 95–117, 123–145, 151–173, 179–201, 207–229, 235–257, 263–285, 291–313, 319–341, 375–397, 403–425, and 431–453; these read FICS…CGKH, FTCT…HKTH, FTCM…YKAH, VRCT…KRLH, FACT…QRTH, FTCT…RRTH, FTCT…QITH, FTCT…QRTH, and FTCT…RITH.

This sequence belongs to the krueppel C2H2-type zinc-finger protein family.

It localises to the nucleus. In terms of biological role, may be involved in transcriptional regulation. This is Oocyte zinc finger protein XlCOF6 from Xenopus laevis (African clawed frog).